An 88-amino-acid polypeptide reads, in one-letter code: Large ribosomal subunit protein bL31B (88 aa).

This sequence belongs to the bacterial ribosomal protein bL31 family. Type B subfamily. In terms of assembly, part of the 50S ribosomal subunit.

The chain is Large ribosomal subunit protein bL31B from Corynebacterium diphtheriae (strain ATCC 700971 / NCTC 13129 / Biotype gravis).